A 1162-amino-acid chain; its full sequence is Transcription termination factor 2 (1162 aa).

Cys6, His9, Cys32, and Cys37 together coordinate Zn(2+). Residues 6 to 46 form a GRF-type zinc finger; sequence CPEHGTFCFLKTGVRDGPNKGKSFYVCRADTCSFVRATDIP. 4 disordered regions span residues 97-116, 142-358, 388-407, and 459-503; these read PDSKEHSVSNKSQHASETFH, IKGE…EEDD, DRSVQRKVSPASGVSKKVEP, and LSPE…TQPV. Polar residues predominate over residues 105 to 116; it reads SNKSQHASETFH. A compositionally biased stretch (basic and acidic residues) spans 142–178; sequence IKGEGEEKKADKKQREKGDQLFDQKKEQKPEMMEKDL. Lys143 is covalently cross-linked (Glycyl lysine isopeptide (Lys-Gly) (interchain with G-Cter in SUMO2)). Over residues 219–232 the composition is skewed to polar residues; sequence IKSQQCQGNELTRP. The span at 233–245 shows a compositional bias: low complexity; sequence SASSQEKSSGKSQ. Residues 246–258 show a composition bias toward basic and acidic residues; that stretch reads DVQRESEPLREKV. Over residues 261 to 274 the composition is skewed to polar residues; the sequence is LLPQNVHSHNSISK. A compositionally biased stretch (low complexity) spans 323 to 338; that stretch reads PAPGGPAAQAAPAAPG. The segment covering 459–485 has biased composition (polar residues); that stretch reads LSPEQGTNEKSNSQVPQQSHFTKTTTG. Position 460 is a phosphoserine (Ser460). Residues 583-786 enclose the Helicase ATP-binding domain; the sequence is WRESQKPQGG…YSLLKFLRCS (204 aa). Residue 596-603 coordinates ATP; it reads DDMGLGKT. Residues 737 to 740 carry the DEAH box motif; it reads DEAH. Positions 871 to 890 are disordered; sequence KRHESRGNQSGRSPNNPFSR. Polar residues predominate over residues 877–888; it reads GNQSGRSPNNPF. 2 positions are modified to phosphoserine: Ser883 and Ser908. One can recognise a Helicase C-terminal domain in the interval 995-1157; sequence SLLAELEAIQ…VTKLTLADLR (163 aa).

The protein belongs to the SNF2/RAD54 helicase family. Interacts with CDC5L. Part of the spliceosome.

It is found in the cytoplasm. Its subcellular location is the nucleus. In terms of biological role, dsDNA-dependent ATPase which acts as a transcription termination factor by coupling ATP hydrolysis with removal of RNA polymerase II from the DNA template. May contribute to mitotic transcription repression. May also be involved in pre-mRNA splicing. The polypeptide is Transcription termination factor 2 (TTF2) (Homo sapiens (Human)).